The primary structure comprises 111 residues: Thiosulfate sulfurtransferase GlpE (111 aa).

The Rhodanese domain maps to 16-104 (QTENAVLLDV…WQRAGLPMET (89 aa)). The Cysteine persulfide intermediate role is filled by cysteine 64.

It belongs to the GlpE family.

It localises to the cytoplasm. The catalysed reaction is thiosulfate + hydrogen cyanide = thiocyanate + sulfite + 2 H(+). The enzyme catalyses thiosulfate + [thioredoxin]-dithiol = [thioredoxin]-disulfide + hydrogen sulfide + sulfite + 2 H(+). Functionally, transferase that catalyzes the transfer of sulfur from thiosulfate to thiophilic acceptors such as cyanide or dithiols. May function in a CysM-independent thiosulfate assimilation pathway by catalyzing the conversion of thiosulfate to sulfite, which can then be used for L-cysteine biosynthesis. The sequence is that of Thiosulfate sulfurtransferase GlpE from Actinobacillus succinogenes (strain ATCC 55618 / DSM 22257 / CCUG 43843 / 130Z).